A 643-amino-acid chain; its full sequence is Hepatoma-derived growth factor-related protein 2 (643 aa).

Positions 7–64 constitute a PWWP domain; the sequence is PGDLVFAKMKGYPHWPARIDDVKDGAVKPPPNKYPIFFYGTHETAFLAPKDLFPYEKC. Disordered regions lie at residues 88–450 and 548–643; these read PQAS…KKPE and LESQ…NQTS. Residues 90 to 104 are compositionally biased toward low complexity; it reads ASYSLPPASVSSSDS. The span at 107–116 shows a compositional bias: basic and acidic residues; it reads PEEKSTARSD. Over residues 176–187 the composition is skewed to acidic residues; it reads SEEENSDSDQDF. A compositionally biased stretch (polar residues) spans 194 to 204; the sequence is PRIQRRTTNLG. Basic and acidic residues predominate over residues 209-231; that stretch reads IFAESDSKSDESEDEKKEEEQKK. Low complexity predominate over residues 232-249; the sequence is SPSSSSASSPSLSSSDSE. 3 stretches are compositionally biased toward basic and acidic residues: residues 290 to 353, 373 to 382, and 417 to 450; these read SVDR…DSSK, EDKKPVKEVK, and RPSESARKTNQKEKRGERPRGRPSKVEKEKKKPE. The stretch at 295-345 forms a coiled coil; sequence SEWKKRDEERRRELEERRKKEQEEQLRRLREEEREEEERKKREKAEKGDKS. The span at 549-559 shows a compositional bias: polar residues; that stretch reads ESQQKTVQKVN. Composition is skewed to basic and acidic residues over residues 560-575 and 608-622; these read TAEKDPEEEKQTGKVE and NKTEMETKQNNHAEH.

Belongs to the HDGF family.

It is found in the nucleus. The protein resides in the cytoplasm. In terms of biological role, may act as a regulator of myogenesis. Promotes the repair of DNA double-strand breaks (DSBs) through the homologous recombination pathway by facilitating the recruitment of the DNA endonuclease RBBP8 to the DSBs. This Xenopus tropicalis (Western clawed frog) protein is Hepatoma-derived growth factor-related protein 2 (hdgfl2).